A 399-amino-acid polypeptide reads, in one-letter code: 26S proteasome regulatory subunit S10B homolog B (399 aa).

Gly180–Thr187 lines the ATP pocket. Residue Lys203 forms a Glycyl lysine isopeptide (Lys-Gly) (interchain with G-Cter in ubiquitin) linkage.

The protein belongs to the AAA ATPase family. In terms of assembly, component of the 19S regulatory particle (RP/PA700) base subcomplex of the 26S proteasome. The 26S proteasome is composed of a core protease (CP), known as the 20S proteasome, capped at one or both ends by the 19S regulatory particle (RP/PA700). The RP/PA700 complex is composed of at least 17 different subunits in two subcomplexes, the base and the lid, which form the portions proximal and distal to the 20S proteolytic core, respectively.

It is found in the cytoplasm. The protein localises to the nucleus. Its function is as follows. The 26S proteasome is involved in the ATP-dependent degradation of ubiquitinated proteins. The regulatory (or ATPase) complex confers ATP dependency and substrate specificity to the 26S complex. The chain is 26S proteasome regulatory subunit S10B homolog B (RPT4B) from Arabidopsis thaliana (Mouse-ear cress).